Consider the following 417-residue polypeptide: MADIRNYTMNFGPQHPAAHGVLRLVMELDGEVIRRADPHIGLLHRATEKLAENKTYIQSVPYMDRLDYVSMMVNEHAYVMAIEKLLQIDVPIRAQYIRVMFDEITRILNHLLWLGAHALDVGAMTVFLYTFREREDLMDCYEAVSGARLHAAYYRPGGVYRDLPDSMPQYRSSAIHDEKTTTARNENRQGSLLDFIEDFTHRFPGYVDDYETLLTDNRIWKQRLVDIGVVSPDRAKALGFSGPMLRGSGVAWDLRKKQPYEVYDQVDFDIPVGVNGDCYDRYLVRIEEMRQSNYIIKQCIDWMRKNPGPVITSNFKVAPPPRLSMKQNMEEMIHHFKLFTEGMHVPRGEVYAAVEHPKGEFGIYIISDGANMPYRLKIRAPGFAHLAAMDEMARGHMIADLVAIIGTQDIVFGEIDR.

This sequence belongs to the complex I 49 kDa subunit family. As to quaternary structure, NDH-1 is composed of 14 different subunits. Subunits NuoB, C, D, E, F, and G constitute the peripheral sector of the complex.

It localises to the cell inner membrane. It catalyses the reaction a quinone + NADH + 5 H(+)(in) = a quinol + NAD(+) + 4 H(+)(out). In terms of biological role, NDH-1 shuttles electrons from NADH, via FMN and iron-sulfur (Fe-S) centers, to quinones in the respiratory chain. The immediate electron acceptor for the enzyme in this species is believed to be ubiquinone. Couples the redox reaction to proton translocation (for every two electrons transferred, four hydrogen ions are translocated across the cytoplasmic membrane), and thus conserves the redox energy in a proton gradient. This is NADH-quinone oxidoreductase subunit D from Nitrosomonas eutropha (strain DSM 101675 / C91 / Nm57).